The sequence spans 233 residues: Ribonuclease 3 (233 aa).

In terms of domain architecture, RNase III spans 4 to 126; sequence LNKLMERLGH…IVGAIYIDAG (123 aa). Glutamate 39 is a Mg(2+) binding site. Aspartate 43 is a catalytic residue. Aspartate 112 and glutamate 115 together coordinate Mg(2+). The active site involves glutamate 115. The DRBM domain maps to 153–222; sequence DAKSLLQEWL…AKRFLELLDD (70 aa).

This sequence belongs to the ribonuclease III family. Homodimer. Requires Mg(2+) as cofactor.

Its subcellular location is the cytoplasm. It catalyses the reaction Endonucleolytic cleavage to 5'-phosphomonoester.. Its function is as follows. Digests double-stranded RNA. Involved in the processing of primary rRNA transcript to yield the immediate precursors to the large and small rRNAs (23S and 16S). Processes some mRNAs, and tRNAs when they are encoded in the rRNA operon. Processes pre-crRNA and tracrRNA of type II CRISPR loci if present in the organism. This Coxiella burnetii (strain CbuK_Q154) (Coxiella burnetii (strain Q154)) protein is Ribonuclease 3.